The sequence spans 168 residues: Skp-like protein (168 aa).

The first 22 residues, 1–22, serve as a signal peptide directing secretion; it reads MRKFTQFVLITAAIMAAPSAFA.

Belongs to the Skp family.

This is Skp-like protein from Pseudomonas aeruginosa (strain ATCC 15692 / DSM 22644 / CIP 104116 / JCM 14847 / LMG 12228 / 1C / PRS 101 / PAO1).